Reading from the N-terminus, the 288-residue chain is 33 kDa chaperonin (288 aa).

Cystine bridges form between C236–C238 and C269–C272.

The protein belongs to the HSP33 family. Post-translationally, under oxidizing conditions two disulfide bonds are formed involving the reactive cysteines. Under reducing conditions zinc is bound to the reactive cysteines and the protein is inactive.

The protein localises to the cytoplasm. Functionally, redox regulated molecular chaperone. Protects both thermally unfolding and oxidatively damaged proteins from irreversible aggregation. Plays an important role in the bacterial defense system toward oxidative stress. The protein is 33 kDa chaperonin of Lactococcus lactis subsp. cremoris (strain SK11).